The sequence spans 51 residues: Bacteriocin aureocin A53 (51 aa).

Residue Met-1 is modified to N-formylmethionine.

The protein resides in the secreted. Its function is as follows. Antibacterial peptide active against a broad range of lactic acid bacteria, L.monocytogenes and many epidemiologically unrelated strains of S.aureus involved in bovine mastitis. This chain is Bacteriocin aureocin A53 (aucA), found in Staphylococcus aureus.